Consider the following 145-residue polypeptide: Large ribosomal subunit protein uL16 (145 aa).

The protein belongs to the universal ribosomal protein uL16 family. In terms of assembly, part of the 50S ribosomal subunit.

Functionally, binds 23S rRNA and is also seen to make contacts with the A and possibly P site tRNAs. The protein is Large ribosomal subunit protein uL16 of Lactobacillus johnsonii (strain CNCM I-12250 / La1 / NCC 533).